We begin with the raw amino-acid sequence, 314 residues long: Small ribosomal subunit biogenesis GTPase RsgA (314 aa).

In terms of domain architecture, CP-type G spans 78-238; sequence SEIFREKLIA…IIDSPGFQEF (161 aa). GTP is bound by residues 127-130 and 180-188; these read NKID and GQSGVGKST. Zn(2+) is bound by residues C262, C267, H269, and C275.

This sequence belongs to the TRAFAC class YlqF/YawG GTPase family. RsgA subfamily. As to quaternary structure, monomer. Associates with 30S ribosomal subunit, binds 16S rRNA. Zn(2+) serves as cofactor.

It localises to the cytoplasm. Its function is as follows. One of several proteins that assist in the late maturation steps of the functional core of the 30S ribosomal subunit. Helps release RbfA from mature subunits. May play a role in the assembly of ribosomal proteins into the subunit. Circularly permuted GTPase that catalyzes slow GTP hydrolysis, GTPase activity is stimulated by the 30S ribosomal subunit. The chain is Small ribosomal subunit biogenesis GTPase RsgA from Nitrosomonas europaea (strain ATCC 19718 / CIP 103999 / KCTC 2705 / NBRC 14298).